We begin with the raw amino-acid sequence, 425 residues long: L-cysteine:1D-myo-inositol 2-amino-2-deoxy-alpha-D-glucopyranoside ligase (425 aa).

C43 provides a ligand contact to Zn(2+). L-cysteinyl-5'-AMP-binding positions include C43–T46, T58, and N81–T83. Positions I45 to H55 match the 'HIGH' region motif. Positions E195–P200 match the 'ERGGDP' region motif. An L-cysteinyl-5'-AMP-binding site is contributed by W236. C240 serves as a coordination point for Zn(2+). G258–D260 is a binding site for L-cysteinyl-5'-AMP. Residue H265 coordinates Zn(2+). V295 provides a ligand contact to L-cysteinyl-5'-AMP. Positions K301–S305 match the 'KMSKS' region motif.

The protein belongs to the class-I aminoacyl-tRNA synthetase family. MshC subfamily. In terms of assembly, monomer. It depends on Zn(2+) as a cofactor.

It catalyses the reaction 1D-myo-inositol 2-amino-2-deoxy-alpha-D-glucopyranoside + L-cysteine + ATP = 1D-myo-inositol 2-(L-cysteinylamino)-2-deoxy-alpha-D-glucopyranoside + AMP + diphosphate + H(+). In terms of biological role, catalyzes the ATP-dependent condensation of GlcN-Ins and L-cysteine to form L-Cys-GlcN-Ins. This is L-cysteine:1D-myo-inositol 2-amino-2-deoxy-alpha-D-glucopyranoside ligase from Sanguibacter keddieii (strain ATCC 51767 / DSM 10542 / NCFB 3025 / ST-74).